We begin with the raw amino-acid sequence, 68 residues long: Large ribosomal subunit protein uL29 (68 aa).

The protein belongs to the universal ribosomal protein uL29 family.

The protein is Large ribosomal subunit protein uL29 of Roseobacter denitrificans (strain ATCC 33942 / OCh 114) (Erythrobacter sp. (strain OCh 114)).